The sequence spans 55 residues: Cortexin domain containing 2 (55 aa).

The helical transmembrane segment at 16-36 (FAIAFVVLLFLFLIVMIFRCA) threads the bilayer.

It is found in the membrane. This is Cortexin domain containing 2 from Homo sapiens (Human).